The primary structure comprises 128 residues: Ribonuclease P protein component (128 aa).

It belongs to the RnpA family. Consists of a catalytic RNA component (M1 or rnpB) and a protein subunit.

The enzyme catalyses Endonucleolytic cleavage of RNA, removing 5'-extranucleotides from tRNA precursor.. RNaseP catalyzes the removal of the 5'-leader sequence from pre-tRNA to produce the mature 5'-terminus. It can also cleave other RNA substrates such as 4.5S RNA. The protein component plays an auxiliary but essential role in vivo by binding to the 5'-leader sequence and broadening the substrate specificity of the ribozyme. The sequence is that of Ribonuclease P protein component from Prochlorococcus marinus (strain MIT 9301).